Reading from the N-terminus, the 425-residue chain is MAFLALGINHKTASVDVRERVAFTPEQLVDALQQLCRLTSSREAAILSTCNRSELYIEQDHLSADAVLQWLADYHRLSLDELRASAYVHEEHEAVKHMMRVASGLDSLVLGEPQILGQMKSAYAVAREAGTVGPLLGRLFQATFSAAKQVRTDTAIGENPVSVAFAAVSLAKQIFADLGRSQALLIGAGETITLVARHLHEQGVRRIVVANRTLERASILAEQFGAHAVLLADIPQELANSDIVISSTASQLPILGKGAVESALKQRRHKPIFMVDIAVPRDIETEVGELDDVYLYTVDDLHDVVAENLKSRQGAAQAAEELVSVGAEDFMLRLRELAAVDVLRAYRQQSERLRDEELQKALRLLANGGNPEDVLAQLARGLTNKLLHAPSVQLKKLSAEGRLDALAMAQELFALNEGSTDKSPQ.

Substrate contacts are provided by residues T49–R52, S107, E112–Q114, and Q118. The active-site Nucleophile is the C50. Residue G187–I192 coordinates NADP(+).

Belongs to the glutamyl-tRNA reductase family. As to quaternary structure, homodimer.

It catalyses the reaction (S)-4-amino-5-oxopentanoate + tRNA(Glu) + NADP(+) = L-glutamyl-tRNA(Glu) + NADPH + H(+). Its pathway is porphyrin-containing compound metabolism; protoporphyrin-IX biosynthesis; 5-aminolevulinate from L-glutamyl-tRNA(Glu): step 1/2. In terms of biological role, catalyzes the NADPH-dependent reduction of glutamyl-tRNA(Glu) to glutamate 1-semialdehyde (GSA). The sequence is that of Glutamyl-tRNA reductase from Pseudomonas putida (strain ATCC 700007 / DSM 6899 / JCM 31910 / BCRC 17059 / LMG 24140 / F1).